We begin with the raw amino-acid sequence, 304 residues long: Peroxisomal membrane protein 13 (304 aa).

Disordered stretches follow at residues 1 to 78 (MASQ…WEQQ) and 258 to 304 (PRKM…VWGN). Composition is skewed to polar residues over residues 19–44 (NTSG…SGTA) and 56–67 (RPNTAANMNSLS). The segment covering 262 to 279 (QQPPQGPNGLPLPHQPHG) has biased composition (low complexity).

It belongs to the peroxin-13 family. As to quaternary structure, interacts with PEX14; forming the PEX13-PEX14 docking complex. Interacts (via N-terminus) with PEX7, but not with PEX5. Interacts with APEM9 (via N-terminus). As to expression, highly expressed in pollen. Detected in shoots, roots, stems, leaves, inflorescences and emasculated postils. Strongly expressed in both male and female gametophytes during fertilization.

Its subcellular location is the peroxisome membrane. Its function is as follows. Component of the PEX13-PEX14 docking complex, a translocon channel that specifically mediates the import of peroxisomal cargo proteins bound to PEX5 receptor. The PEX13-PEX14 docking complex forms a large import pore which can be opened to a diameter of about 9 nm. Mechanistically, PEX5 receptor along with cargo proteins associates with the PEX14 subunit of the PEX13-PEX14 docking complex in the cytosol, leading to the insertion of the receptor into the organelle membrane with the concomitant translocation of the cargo into the peroxisome matrix. Essential for pollen-tube discharge that take place only in the presence of functional peroxisomes in either the male or the female gametophyte. The sequence is that of Peroxisomal membrane protein 13 from Arabidopsis thaliana (Mouse-ear cress).